A 62-amino-acid chain; its full sequence is Large ribosomal subunit protein bL32 (62 aa).

A compositionally biased stretch (basic residues) spans 1 to 16; the sequence is MAVPKRKTSPMKRGFR. Residues 1 to 62 form a disordered region; that stretch reads MAVPKRKTSP…QILTPKNKEA (62 aa). Basic and acidic residues predominate over residues 28–44; the sequence is VEDKDSGELRRPHHVDL.

Belongs to the bacterial ribosomal protein bL32 family.

This is Large ribosomal subunit protein bL32 from Methylocella silvestris (strain DSM 15510 / CIP 108128 / LMG 27833 / NCIMB 13906 / BL2).